The primary structure comprises 273 residues: 3-methyl-2-oxobutanoate hydroxymethyltransferase 2 (273 aa).

The Mg(2+) site is built by Asp-50 and Asp-89. 3-methyl-2-oxobutanoate is bound by residues 50–51, Asp-89, and Lys-119; that span reads DS. Residue Glu-121 participates in Mg(2+) binding. Glu-188 serves as the catalytic Proton acceptor.

It belongs to the PanB family. In terms of assembly, homodecamer; pentamer of dimers. Requires Mg(2+) as cofactor.

The protein resides in the cytoplasm. It catalyses the reaction 3-methyl-2-oxobutanoate + (6R)-5,10-methylene-5,6,7,8-tetrahydrofolate + H2O = 2-dehydropantoate + (6S)-5,6,7,8-tetrahydrofolate. The protein operates within cofactor biosynthesis; (R)-pantothenate biosynthesis; (R)-pantoate from 3-methyl-2-oxobutanoate: step 1/2. Its function is as follows. Catalyzes the reversible reaction in which hydroxymethyl group from 5,10-methylenetetrahydrofolate is transferred onto alpha-ketoisovalerate to form ketopantoate. The protein is 3-methyl-2-oxobutanoate hydroxymethyltransferase 2 of Zymomonas mobilis subsp. mobilis (strain ATCC 31821 / ZM4 / CP4).